We begin with the raw amino-acid sequence, 67 residues long: Large ribosomal subunit protein uL29c (67 aa).

Belongs to the universal ribosomal protein uL29 family.

The protein resides in the plastid. Its subcellular location is the chloroplast. The chain is Large ribosomal subunit protein uL29c (rpl29) from Porphyra purpurea (Red seaweed).